A 500-amino-acid polypeptide reads, in one-letter code: NAD(P)H-quinone oxidoreductase chain 4, chloroplastic (500 aa).

14 consecutive transmembrane segments (helical) span residues 4-24 (FYWL…IALL), 37-57 (ICIC…HFQL), 80-100 (LGID…TTLA), 113-130 (LFHF…GLFS), 134-154 (LLLF…LLSM), 167-187 (FILY…GMGL), 208-228 (ALEI…SPII), 242-262 (HYST…YGLV), 272-292 (AHSI…IYAA), 305-325 (IAYS…SITD), 330-350 (GAIL…FLAG), 386-406 (LALP…GIIT), 416-436 (ILIT…SLSM), and 462-482 (IFIL…PDFV).

It belongs to the complex I subunit 4 family.

Its subcellular location is the plastid. It localises to the chloroplast thylakoid membrane. It carries out the reaction a plastoquinone + NADH + (n+1) H(+)(in) = a plastoquinol + NAD(+) + n H(+)(out). It catalyses the reaction a plastoquinone + NADPH + (n+1) H(+)(in) = a plastoquinol + NADP(+) + n H(+)(out). In Nuphar advena (Common spatterdock), this protein is NAD(P)H-quinone oxidoreductase chain 4, chloroplastic.